The following is a 43-amino-acid chain: uncharacterized protein (43 aa).

This is an uncharacterized protein from Escherichia coli (Bacteriophage T4).